Here is a 534-residue protein sequence, read N- to C-terminus: Prolyl 4-hydroxylase subunit alpha-1 (534 aa).

Residues 1 to 17 (MIWVVLMMAILLPQSLA) form the signal peptide. N-linked (GlcNAc...) asparagine glycosylation occurs at Asn113. One copy of the TPR repeat lies at 205–238 (VSVLDYLSYAVYQQGDLDKALLLTKKLLELDPEH). N-linked (GlcNAc...) asparagine glycosylation is present at Asn259. The 109-residue stretch at 411-519 (TAEELQVANY…KWVSNKWLHE (109 aa)) folds into the Fe2OG dioxygenase domain. Residues His429, Asp431, and His500 each contribute to the Fe cation site. Lys510 contributes to the 2-oxoglutarate binding site.

This sequence belongs to the P4HA family. Heterotetramer of two alpha-1 chains and two beta chains (P4HB)(the beta chain is the multi-functional PDI), where P4HB plays the role of a structural subunit; this tetramer catalyzes the formation of 4-hydroxyproline in collagen. Fe(2+) is required as a cofactor. It depends on L-ascorbate as a cofactor. In terms of tissue distribution, expressed at least in brain, heart and lung.

Its subcellular location is the endoplasmic reticulum lumen. The enzyme catalyses L-prolyl-[collagen] + 2-oxoglutarate + O2 = trans-4-hydroxy-L-prolyl-[collagen] + succinate + CO2. Inhibited by poly(L-proline). Its function is as follows. Catalyzes the post-translational formation of 4-hydroxyproline in -Xaa-Pro-Gly- sequences in collagens and other proteins. This Mus musculus (Mouse) protein is Prolyl 4-hydroxylase subunit alpha-1 (P4ha1).